The sequence spans 506 residues: Beta-glucosidase 9 (506 aa).

The N-terminal stretch at 1–22 (MKHFSLLFIFLVILLATSYSDA) is a signal peptide. Residues Gln42, His139, and 184–185 (NE) each bind a beta-D-glucoside. The active-site Proton donor is Glu185. Cysteines 204 and 212 form a disulfide. Asn211 and Asn216 each carry an N-linked (GlcNAc...) asparagine glycan. Tyr328 contacts a beta-D-glucoside. N-linked (GlcNAc...) asparagine glycosylation is present at Asn363. Glu396 contacts a beta-D-glucoside. Glu396 acts as the Nucleophile in catalysis. The N-linked (GlcNAc...) asparagine glycan is linked to Asn429. The a beta-D-glucoside site is built by Trp439 and Phe455. 3 N-linked (GlcNAc...) asparagine glycosylation sites follow: Asn461, Asn483, and Asn499.

This sequence belongs to the glycosyl hydrolase 1 family.

The catalysed reaction is Hydrolysis of terminal, non-reducing beta-D-glucosyl residues with release of beta-D-glucose.. This chain is Beta-glucosidase 9, found in Arabidopsis thaliana (Mouse-ear cress).